The chain runs to 909 residues: Phosphoenolpyruvate carboxylase (909 aa).

Active-site residues include His-138 and Lys-572.

It belongs to the PEPCase type 1 family. It depends on Mg(2+) as a cofactor.

The enzyme catalyses oxaloacetate + phosphate = phosphoenolpyruvate + hydrogencarbonate. Forms oxaloacetate, a four-carbon dicarboxylic acid source for the tricarboxylic acid cycle. This chain is Phosphoenolpyruvate carboxylase, found in Lactobacillus delbrueckii subsp. bulgaricus (strain ATCC 11842 / DSM 20081 / BCRC 10696 / JCM 1002 / NBRC 13953 / NCIMB 11778 / NCTC 12712 / WDCM 00102 / Lb 14).